The primary structure comprises 152 residues: MQKNNHNEEIEKEFEEVIVNIGRVTKVVKGGRRFRFTALVVIGDRKGTVGYGFGKAKEVPDAIKKAVDDAHKNLVKVNIKGTTIAHDIEHKFNASRIVLRPASEGTGVIAGGAARPVLELAGIQDVLSKSIGSNNPNNLVRATIQALTRIKA.

The region spanning 14 to 77 (FEEVIVNIGR…DDAHKNLVKV (64 aa)) is the S5 DRBM domain.

It belongs to the universal ribosomal protein uS5 family. As to quaternary structure, part of the 30S ribosomal subunit. Contacts proteins S4 and S8.

With S4 and S12 plays an important role in translational accuracy. Its function is as follows. Located at the back of the 30S subunit body where it stabilizes the conformation of the head with respect to the body. This Sulfurovum sp. (strain NBC37-1) protein is Small ribosomal subunit protein uS5.